Here is an 894-residue protein sequence, read N- to C-terminus: Exocyst complex component 2 (894 aa).

The IPT/TIG domain maps to 5–89 (PVVTGLSPKE…GTSTVQFRAY (85 aa)). Basic and acidic residues predominate over residues 398–413 (HTSKDSGAQEKAKNRD). Residues 398–417 (HTSKDSGAQEKAKNRDSSQA) are disordered.

The protein belongs to the SEC5 family. In terms of assembly, the exocyst complex is composed of Sec3/Exoc1, Sec5/Exoc2, Sec6/Exoc3, Sec8/Exoc4, Sec10/Exoc5, Sec15/Exoc6, Exo70/Exoc7 and Exo84/Exoc8.

Its function is as follows. Component of the exocyst complex involved in the docking of exocytic vesicles with fusion sites on the plasma membrane. This is Exocyst complex component 2 from Drosophila melanogaster (Fruit fly).